A 105-amino-acid chain; its full sequence is UPF0145 protein OEOE_0637 (105 aa).

This sequence belongs to the UPF0145 family.

The chain is UPF0145 protein OEOE_0637 from Oenococcus oeni (strain ATCC BAA-331 / PSU-1).